The chain runs to 557 residues: Potassium-transporting ATPase potassium-binding subunit (557 aa).

Transmembrane regions (helical) follow at residues 5–25, 63–83, 132–152, 170–190, 253–273, 283–303, 329–349, 356–376, 379–399, 416–436, 484–504, and 526–546; these read GFLL…PLGS, LSAI…MLLG, GLTV…FALI, LLRI…LFFI, FVQM…FGEV, LLWA…WAEV, VLVS…AVIA, ALGG…FGGV, GLYG…LMIG, LTAL…ALAM, LLAL…MAIA, and LFVG…FIPA.

Belongs to the KdpA family. In terms of assembly, the system is composed of three essential subunits: KdpA, KdpB and KdpC.

Its subcellular location is the cell inner membrane. In terms of biological role, part of the high-affinity ATP-driven potassium transport (or Kdp) system, which catalyzes the hydrolysis of ATP coupled with the electrogenic transport of potassium into the cytoplasm. This subunit binds the periplasmic potassium ions and delivers the ions to the membrane domain of KdpB through an intramembrane tunnel. The sequence is that of Potassium-transporting ATPase potassium-binding subunit from Escherichia coli O6:H1 (strain CFT073 / ATCC 700928 / UPEC).